Consider the following 227-residue polypeptide: Ribonuclease 3 (227 aa).

The 123-residue stretch at 4–126 (LDRLERKIGY…IIGAMSLDQG (123 aa)) folds into the RNase III domain. Glutamate 39 provides a ligand contact to Mg(2+). Aspartate 43 is an active-site residue. Aspartate 112 and glutamate 115 together coordinate Mg(2+). The active site involves glutamate 115. Positions 153-226 (DAKTRLQEYL…AEQILKELDI (74 aa)) constitute a DRBM domain.

The protein belongs to the ribonuclease III family. In terms of assembly, homodimer. It depends on Mg(2+) as a cofactor.

Its subcellular location is the cytoplasm. The catalysed reaction is Endonucleolytic cleavage to 5'-phosphomonoester.. Digests double-stranded RNA. Involved in the processing of primary rRNA transcript to yield the immediate precursors to the large and small rRNAs (23S and 16S). Processes some mRNAs, and tRNAs when they are encoded in the rRNA operon. Processes pre-crRNA and tracrRNA of type II CRISPR loci if present in the organism. The chain is Ribonuclease 3 from Haemophilus influenzae (strain PittGG).